The primary structure comprises 389 residues: Large envelope protein (389 aa).

Position 1 is an N-acetylmethionine (M1). G2 carries N-myristoyl glycine; by host lipidation. A pre-S1 region spans residues 2-108 (GQNLSTSNPL…PPLRNTHPQA (107 aa)). Residues 2–163 (GQNLSTSNPL…FSRIGDPALN (162 aa)) form a pre-S region. The Virion surface; in external conformation portion of the chain corresponds to 2–170 (GQNLSTSNPL…ALNMENITSG (169 aa)). Over 2 to 242 (GQNLSTSNPL…PGYRWMCLRR (241 aa)) the chain is Intravirion; in internal conformation. Residues 76–103 (TLPANPPPASTNRQSGRQPTPLSPPLRN) are disordered. Residues 85–95 (STNRQSGRQPT) show a composition bias toward polar residues. A pre-S2 region spans residues 109 to 163 (MQWNSTTFHQTLQDPRVRGLYLPAGGSSSGTVNPVPTTVSPISSIFSRIGDPALN). Residues 171-191 (FLGPLLVLQAGFFLLTKILTI) form a helical membrane-spanning segment. Residues 192–242 (PKSLDSWWTSLNFLGGTTVCLGQNSQSPTSNHSPTSCPPTCPGYRWMCLRR) are Intravirion; in external conformation-facing. The chain crosses the membrane as a helical span at residues 243–263 (FIIFLFILLLCLIFLLVLLDY). Residues 264–337 (QGMLPVCPLI…WASARFSWLS (74 aa)) are Virion surface-facing. A glycan (N-linked (GlcNAc...) asparagine; by host) is linked at N309. A helical membrane pass occupies residues 338–358 (LLVPFVQWFVGLSPTVWLLVI). Residues 359–364 (WMMWYW) lie on the Intravirion side of the membrane. The chain crosses the membrane as a helical span at residues 365 to 387 (GPKLFTILSPFLPLLPIFFCLWV). Residues 388–389 (YI) are Virion surface-facing.

The protein belongs to the orthohepadnavirus major surface antigen family. As to quaternary structure, in its internal form (Li-HBsAg), interacts with the capsid protein and with the isoform S. Interacts with host chaperone CANX. Associates with host chaperone CANX through its pre-S2 N glycan; this association may be essential for isoform M proper secretion. In terms of assembly, interacts with isoform L. Interacts with the antigens of satellite virus HDV (HDVAgs); this interaction is required for encapsidation of HDV genomic RNA. Post-translationally, isoform M is N-terminally acetylated by host at a ratio of 90%, and N-glycosylated by host at the pre-S2 region. In terms of processing, myristoylated.

It is found in the virion membrane. In terms of biological role, the large envelope protein exists in two topological conformations, one which is termed 'external' or Le-HBsAg and the other 'internal' or Li-HBsAg. In its external conformation the protein attaches the virus to cell receptors and thereby initiating infection. This interaction determines the species specificity and liver tropism. This attachment induces virion internalization predominantly through caveolin-mediated endocytosis. The large envelope protein also assures fusion between virion membrane and endosomal membrane. In its internal conformation the protein plays a role in virion morphogenesis and mediates the contact with the nucleocapsid like a matrix protein. The middle envelope protein plays an important role in the budding of the virion. It is involved in the induction of budding in a nucleocapsid independent way. In this process the majority of envelope proteins bud to form subviral lipoprotein particles of 22 nm of diameter that do not contain a nucleocapsid. In Homo sapiens (Human), this protein is Large envelope protein.